The chain runs to 804 residues: Protein-lysine N-methyltransferase SMYD4 (804 aa).

S-adenosyl-L-methionine is bound at residue 112 to 114; it reads RSA. The 342-residue stretch at 233–574 folds into the SET domain; the sequence is SSVGLCIDPL…KGQEILHCYG (342 aa). Positions 296, 299, 309, 312, 318, 322, 331, and 335 each coordinate Zn(2+). An MYND-type zinc finger spans residues 296–335; it reads CHRCLKHTLATVPCDGCSYAKYCSQECLQQAWELYHRTEC. S-adenosyl-L-methionine contacts are provided by residues Asn-427, 539–540, Tyr-573, and Phe-595; that span reads NH.

Belongs to the class V-like SAM-binding methyltransferase superfamily. Interacts (via MYND-type zinc finger) with HDAC1.

The protein resides in the nucleus. The protein localises to the cytoplasm. It catalyses the reaction L-lysyl-[protein] + S-adenosyl-L-methionine = N(6)-methyl-L-lysyl-[protein] + S-adenosyl-L-homocysteine + H(+). In terms of biological role, protein-lysine N-methyltransferase. Monomethylates PRMT5, modulating its transcriptional activity. May also act as a histone methyltransferase. Plays a critical role in cardiac development. Acts as a key epigenetic regulator of gene expression during cardiac development via its dual activities as a methyltransferase and negative regulator of HDAC1. The polypeptide is Protein-lysine N-methyltransferase SMYD4 (SMYD4) (Pongo abelii (Sumatran orangutan)).